A 594-amino-acid polypeptide reads, in one-letter code: AT-rich interactive domain-containing protein 5A (594 aa).

The disordered stretch occupies residues 1–56 (MAAPVKGNRKQSTEGDALDPPASPKPAGKQNGIQNPISLEDSPEAGGEREEEQERE). Residues 1–300 (MAAPVKGNRK…AVHLPESPQS (300 aa)) form an interaction with SOX9 region. Position 23 is a phosphoserine (S23). The 93-residue stretch at 55 to 147 (REEEQAFLVS…LVLPYVRHLK (93 aa)) folds into the ARID domain. Glycyl lysine isopeptide (Lys-Gly) (interchain with G-Cter in ubiquitin) cross-links involve residues K85 and K94. The disordered stretch occupies residues 146–223 (LKGEDDKPLP…NSTEQQGLAS (78 aa)). Positions 165 to 189 (MAKENRGDDGATERPKKAKEERRMD) are enriched in basic and acidic residues. Residues S256 and S289 each carry the phosphoserine modification. Disordered regions lie at residues 281–331 (RHGA…EAQA) and 426–454 (AESP…GAAH). The segment covering 297-306 (SPQSPKGLTE) has biased composition (polar residues). Residues S438 and S463 each carry the phosphoserine modification.

Interacts with SOX9. Interacts with ESR1. Interacts with RORC. Phosphorylated by MAPK14 on serine residues involving a TLR4 signaling pathway upon lipopolysaccharide (LPS) stimulation leading to its ubiquitination and proteasomal degradation. Post-translationally, ubiquitinated leading to proteasomal degradation; involving WWP1 linked to MAPK14-mediated phosphorylation upon LPS stimulation.

It is found in the nucleus. Its function is as follows. DNA-binding protein that may regulate transcription and act as a repressor by binding to AT-rich stretches in the promoter region of target genes. May positively regulate chondrocyte-specific transcription such as of COL2A1 in collaboration with SOX9 and positively regulate histone H3 acetylation at chondrocyte-specific genes. May stimulate early-stage chondrocyte differentiation and inhibit later stage differention. Can repress ESR1-mediated transcriptional activation; proposed to act as corepressor for selective nuclear hormone receptors. As an RNA-binding protein, involved in the regulation of inflammatory response by stabilizing selective inflammation-related mRNAs, such as STAT3 and TBX21. Also stabilizes IL6 mRNA. Binds to stem loop structures located in the 3'UTRs of IL6, STAT3 and TBX21 mRNAs; at least for STAT3 prevents binding of ZC3H12A to the mRNA stem loop structure thus inhibiting its degradation activity. Contributes to elevated IL6 levels possibly implicated in autoimmunity processes. IL6-dependent stabilization of STAT3 mRNA may promote differentiation of naive CD4+ T-cells into T-helper Th17 cells. In CD4+ T-cells may also inhibit RORC-induced Th17 cell differentiation independently of IL6 signaling. Stabilization of TBX21 mRNA contributes to elevated interferon-gamma secretion in Th1 cells possibly implicated in the establishment of septic shock. Stabilizes TNFRSF4/OX40 mRNA by binding to the conserved stem loop structure in its 3'UTR; thereby competing with the mRNA-destabilizing functions of RC3H1 and endoribonuclease ZC3H12A. This chain is AT-rich interactive domain-containing protein 5A (ARID5A), found in Homo sapiens (Human).